The chain runs to 277 residues: Release factor glutamine methyltransferase (277 aa).

Residues G119–G123, D142, and N184 each bind S-adenosyl-L-methionine. N184 to Y187 serves as a coordination point for substrate.

This sequence belongs to the protein N5-glutamine methyltransferase family. PrmC subfamily.

The catalysed reaction is L-glutaminyl-[peptide chain release factor] + S-adenosyl-L-methionine = N(5)-methyl-L-glutaminyl-[peptide chain release factor] + S-adenosyl-L-homocysteine + H(+). In terms of biological role, methylates the class 1 translation termination release factors RF1/PrfA and RF2/PrfB on the glutamine residue of the universally conserved GGQ motif. The protein is Release factor glutamine methyltransferase of Enterococcus faecalis (strain ATCC 700802 / V583).